We begin with the raw amino-acid sequence, 176 residues long: NAD(P)H-quinone oxidoreductase subunit 6, chloroplastic (176 aa).

5 helical membrane-spanning segments follow: residues Phe-10–Pro-30, Pro-32–Leu-52, Ala-61–Met-81, Leu-92–Ile-112, and Phe-152–Ala-172.

The protein belongs to the complex I subunit 6 family. NDH is composed of at least 16 different subunits, 5 of which are encoded in the nucleus.

Its subcellular location is the plastid. It localises to the chloroplast thylakoid membrane. The enzyme catalyses a plastoquinone + NADH + (n+1) H(+)(in) = a plastoquinol + NAD(+) + n H(+)(out). The catalysed reaction is a plastoquinone + NADPH + (n+1) H(+)(in) = a plastoquinol + NADP(+) + n H(+)(out). In terms of biological role, NDH shuttles electrons from NAD(P)H:plastoquinone, via FMN and iron-sulfur (Fe-S) centers, to quinones in the photosynthetic chain and possibly in a chloroplast respiratory chain. The immediate electron acceptor for the enzyme in this species is believed to be plastoquinone. Couples the redox reaction to proton translocation, and thus conserves the redox energy in a proton gradient. The chain is NAD(P)H-quinone oxidoreductase subunit 6, chloroplastic (ndhG) from Solanum lycopersicum (Tomato).